Consider the following 631-residue polypeptide: MDYSFDTTAEDPWVRISDCIKNLFSPIMSENPGHMPLQPNASLSEEDGTQGHPDGNPPKLDTANGTPKVYKSADRSTVKKGPPVAPKPAWFRQSLKGLRNRASDPRGLPDPALSTQPAPASREHLGPHIRASSSSSSIKQRISSFETFGSSQLPDKGAQRLSLQPSSGEAAKPLGKHEGGRFSGLLGRGAAPTLVPQQPEQVLPSGSPAATEARDPGVSESPPPGLQPNQKTLPTGSDPLLRLLSTQTEKSQGPVLKMPSQRARSFPLTRSQSCETKLLDEKTSKLYSISSQVSSAVMKSLLCLPSSLSCAQTPCIPKEGASPTSSSNEDSAANGSAETSASDTGFSLNLSELREYTEGLTEAKEDDDGDHSSHQSGQSVISLLSSEELKQLIEEVKVLDEATLKQLDSIHVTILHKEEGAGLGFSLAGGADLENKVITVHKVFPNGLASQEGTIQKGNEVLSINGKSLKGTTHNDALAILRQAREPRQAVIVTRKLTAESMPDLNSTTDSAASASAASDVSVESSAEATVYTVTLEKMSAGLGFSLEGGKGSLHGDKPLTINRIFKGAASEQSETIQPGDEILQLAGTAMQGLTRFEAWNIIKALPDGPVTIVIRRKSLQPKETTAAADS.

Disordered stretches follow at residues 30–269 (ENPG…FPLT) and 317–344 (PKEGASPTSSSNEDSAANGSAETSASDT). Residues 132-144 (SSSSSSIKQRISS) show a composition bias toward low complexity. Position 221 is a phosphoserine (serine 221). A compositionally biased stretch (polar residues) spans 322–344 (SPTSSSNEDSAANGSAETSASDT). An interaction with PPP1R12A, PPP1R12B and PPP1R12C region spans residues 405–501 (KQLDSIHVTI…IVTRKLTAES (97 aa)). 2 consecutive PDZ domains span residues 411–496 (HVTI…VTRK) and 533–618 (TVTL…IRRK).

Homotetramer. Pro-interleukin-16 interacts (via PDZ 2 domain) with PPP1R12A, PPP1R12B and PPP1R12C. Pro-interleukin-16 interacts with GRIN2A. Pro-interleukin-16 interacts with GABPB1. Pro-interleukin-16 interacts (via PDZ 3 domain) with HDAC3.

Its subcellular location is the secreted. It localises to the cytoplasm. The protein resides in the nucleus. Functionally, interleukin-16 stimulates a migratory response in CD4+ lymphocytes, monocytes, and eosinophils. Primes CD4+ T-cells for IL-2 and IL-15 responsiveness. Also induces T-lymphocyte expression of interleukin 2 receptor. Ligand for CD4. In terms of biological role, pro-interleukin-16 is involved in cell cycle progression in T-cells. Appears to be involved in transcriptional regulation of SKP2 and is probably part of a transcriptional repression complex on the core promoter of the SKP2 gene. May act as a scaffold for GABPB1 (the DNA-binding subunit the GABP transcription factor complex) and HDAC3 thus maintaining transcriptional repression and blocking cell cycle progression in resting T-cells. The polypeptide is Pro-interleukin-16 (IL16) (Chlorocebus aethiops (Green monkey)).